A 93-amino-acid polypeptide reads, in one-letter code: MASEIVVDHREKALALLKRDADKILKLIQVQMDNLTMPQCPLYEEVLDTQMFGLSREIDFAVRLGLVDEEEGKELLYRLERELSALHDAFTKK.

It belongs to the UPF0358 family.

This Bacillus licheniformis (strain ATCC 14580 / DSM 13 / JCM 2505 / CCUG 7422 / NBRC 12200 / NCIMB 9375 / NCTC 10341 / NRRL NRS-1264 / Gibson 46) protein is UPF0358 protein BLi01701/BL02974.